The following is a 436-amino-acid chain: MDTIFAVSSGLLPSGVAVIRLSGPHVINIVKALCGHLPKARLMHYGNLTARDGSFLDSALTVFFPAPHSFTGEDCAEFHLHGSKAVVNRFLDELSTFDGCRSAEAGEFSRRAFMEGKLDLIQAESLADLIEAETESQRRLAVMGTSGRLTTLYRDWRNRLIKARAFIEAELDFSDEADVSDLISDKVWEDVEELCISIRDHIAQGERANILRDGLKIVIAGAPNSGKSSIMNRLAGKSVAIVMEEAGTTRDALEIRLVLGGLPVFLTDTAGLRETENKIEQLGIEIAKQHIVDADLVILVYDMGNPKEVNLPETSAEIWHVGNKLDLYEEENKKTWTIQFSALTGLNFDYFIKELESFCLRRVSEIGNLFPARKRQLQLLKEAIREIEASINYRSLDLSLHAEHLRCASVFLGKITGDIDVEDLLDIIFSEFCIGK.

Residues arginine 20, glutamate 77, and lysine 117 each contribute to the (6S)-5-formyl-5,6,7,8-tetrahydrofolate site. The TrmE-type G domain maps to 214-360 (GLKIVIAGAP…FIKELESFCL (147 aa)). Residues 224 to 229 (NSGKSS), 243 to 249 (MEEAGTT), and 268 to 271 (DTAG) each bind GTP. Residues serine 228 and threonine 249 each contribute to the Mg(2+) site. Residue lysine 436 participates in (6S)-5-formyl-5,6,7,8-tetrahydrofolate binding.

This sequence belongs to the TRAFAC class TrmE-Era-EngA-EngB-Septin-like GTPase superfamily. TrmE GTPase family. In terms of assembly, homodimer. Heterotetramer of two MnmE and two MnmG subunits. Requires K(+) as cofactor.

It localises to the cytoplasm. Its function is as follows. Exhibits a very high intrinsic GTPase hydrolysis rate. Involved in the addition of a carboxymethylaminomethyl (cmnm) group at the wobble position (U34) of certain tRNAs, forming tRNA-cmnm(5)s(2)U34. This Bartonella quintana (strain Toulouse) (Rochalimaea quintana) protein is tRNA modification GTPase MnmE.